Consider the following 138-residue polypeptide: Transcription antitermination protein NusB (138 aa).

This sequence belongs to the NusB family.

In terms of biological role, involved in transcription antitermination. Required for transcription of ribosomal RNA (rRNA) genes. Binds specifically to the boxA antiterminator sequence of the ribosomal RNA (rrn) operons. The sequence is that of Transcription antitermination protein NusB from Tolumonas auensis (strain DSM 9187 / NBRC 110442 / TA 4).